Reading from the N-terminus, the 189-residue chain is Transcriptional repressor NrdR (189 aa).

A zinc finger lies at 3 to 34 (CPFCRGDDSRVVDSREVEDGQAIRRRRSCSGC). The 91-residue stretch at 46–136 (LSVVKRSGVT…VYRAFSSVED (91 aa)) folds into the ATP-cone domain. The tract at residues 152-189 (RLPEGPEAAQGGPESKAGNGQAAGSGDPEGVKAEKSSE) is disordered. Positions 180-189 (EGVKAEKSSE) are enriched in basic and acidic residues.

The protein belongs to the NrdR family. The cofactor is Zn(2+).

Its function is as follows. Negatively regulates transcription of bacterial ribonucleotide reductase nrd genes and operons by binding to NrdR-boxes. The polypeptide is Transcriptional repressor NrdR (Saccharopolyspora erythraea (strain ATCC 11635 / DSM 40517 / JCM 4748 / NBRC 13426 / NCIMB 8594 / NRRL 2338)).